The primary structure comprises 512 residues: Histidine ammonia-lyase (512 aa).

Positions 142–144 form a cross-link, 5-imidazolinone (Ala-Gly); sequence ASG. 2,3-didehydroalanine (Ser) is present on Ser143.

The protein belongs to the PAL/histidase family. Contains an active site 4-methylidene-imidazol-5-one (MIO), which is formed autocatalytically by cyclization and dehydration of residues Ala-Ser-Gly.

The protein localises to the cytoplasm. The catalysed reaction is L-histidine = trans-urocanate + NH4(+). It participates in amino-acid degradation; L-histidine degradation into L-glutamate; N-formimidoyl-L-glutamate from L-histidine: step 1/3. This is Histidine ammonia-lyase from Bartonella tribocorum (strain CIP 105476 / IBS 506).